Reading from the N-terminus, the 141-residue chain is Large ribosomal subunit protein uL11 (141 aa).

It belongs to the universal ribosomal protein uL11 family. Part of the ribosomal stalk of the 50S ribosomal subunit. Interacts with L10 and the large rRNA to form the base of the stalk. L10 forms an elongated spine to which L12 dimers bind in a sequential fashion forming a multimeric L10(L12)X complex. One or more lysine residues are methylated.

Its function is as follows. Forms part of the ribosomal stalk which helps the ribosome interact with GTP-bound translation factors. The polypeptide is Large ribosomal subunit protein uL11 (Chlamydia felis (strain Fe/C-56) (Chlamydophila felis)).